The following is a 288-amino-acid chain: Damage-control phosphatase AF_1104 (288 aa).

A Subfamily I CxxC motif motif is present at residues 7–10; the sequence is CPSC. Asp-160, Asn-161, and Asp-194 together coordinate Mn(2+). Residues 247-250 carry the Subfamily I GNFE-like motif motif; sequence ANYE. The Subfamily I KC motif signature appears at 267–268; the sequence is KC.

The protein belongs to the damage-control phosphatase family. Nucleotides phosphatase I subfamily. Requires [2Fe-2S] cluster as cofactor. It depends on Mn(2+) as a cofactor. The cofactor is Ni(2+).

In terms of biological role, metal-dependent phosphatase with probable damage-control functions. Could hydrolyze oxidatively damaged purine nucleotides or their biosynthetic intermediates. The sequence is that of Damage-control phosphatase AF_1104 from Archaeoglobus fulgidus (strain ATCC 49558 / DSM 4304 / JCM 9628 / NBRC 100126 / VC-16).